Reading from the N-terminus, the 154-residue chain is UPF0178 protein GM21_2006 (154 aa).

It belongs to the UPF0178 family.

This chain is UPF0178 protein GM21_2006, found in Geobacter sp. (strain M21).